We begin with the raw amino-acid sequence, 461 residues long: Fumarate hydratase class II (461 aa).

Substrate-binding positions include 99–101 (SGT), Arg-127, 130–133 (HPND), 140–142 (SSN), and Thr-188. His-189 acts as the Proton donor/acceptor in catalysis. Ser-319 is an active-site residue. Substrate-binding positions include Ser-320 and 325 to 327 (KVN).

It belongs to the class-II fumarase/aspartase family. Fumarase subfamily. In terms of assembly, homotetramer.

The protein localises to the cytoplasm. It catalyses the reaction (S)-malate = fumarate + H2O. Its pathway is carbohydrate metabolism; tricarboxylic acid cycle; (S)-malate from fumarate: step 1/1. In terms of biological role, involved in the TCA cycle. Catalyzes the stereospecific interconversion of fumarate to L-malate. This chain is Fumarate hydratase class II, found in Chromobacterium violaceum (strain ATCC 12472 / DSM 30191 / JCM 1249 / CCUG 213 / NBRC 12614 / NCIMB 9131 / NCTC 9757 / MK).